The sequence spans 360 residues: Peptide chain release factor 1 (360 aa).

Gln237 is subject to N5-methylglutamine.

Belongs to the prokaryotic/mitochondrial release factor family. Post-translationally, methylated by PrmC. Methylation increases the termination efficiency of RF1.

The protein localises to the cytoplasm. Peptide chain release factor 1 directs the termination of translation in response to the peptide chain termination codons UAG and UAA. In Ectopseudomonas mendocina (strain ymp) (Pseudomonas mendocina), this protein is Peptide chain release factor 1.